Here is a 545-residue protein sequence, read N- to C-terminus: Chaperonin GroEL (545 aa).

ATP is bound by residues 30 to 33 (TLGP), Lys-51, 87 to 91 (DGTTT), Gly-415, 479 to 481 (NAA), and Asp-495.

This sequence belongs to the chaperonin (HSP60) family. As to quaternary structure, forms a cylinder of 14 subunits composed of two heptameric rings stacked back-to-back. Interacts with the co-chaperonin GroES.

Its subcellular location is the cytoplasm. The catalysed reaction is ATP + H2O + a folded polypeptide = ADP + phosphate + an unfolded polypeptide.. Its function is as follows. Together with its co-chaperonin GroES, plays an essential role in assisting protein folding. The GroEL-GroES system forms a nano-cage that allows encapsulation of the non-native substrate proteins and provides a physical environment optimized to promote and accelerate protein folding. The polypeptide is Chaperonin GroEL (Cellvibrio japonicus (strain Ueda107) (Pseudomonas fluorescens subsp. cellulosa)).